We begin with the raw amino-acid sequence, 232 residues long: Ribose-5-phosphate isomerase A (232 aa).

Residues 31 to 34, 87 to 90, and 100 to 103 each bind substrate; these read TGST, DGAD, and KGGG. Glu109 acts as the Proton acceptor in catalysis. Residue Lys127 participates in substrate binding.

The protein belongs to the ribose 5-phosphate isomerase family. In terms of assembly, homodimer.

The enzyme catalyses aldehydo-D-ribose 5-phosphate = D-ribulose 5-phosphate. It functions in the pathway carbohydrate degradation; pentose phosphate pathway; D-ribose 5-phosphate from D-ribulose 5-phosphate (non-oxidative stage): step 1/1. Its function is as follows. Catalyzes the reversible conversion of ribose-5-phosphate to ribulose 5-phosphate. This is Ribose-5-phosphate isomerase A from Bifidobacterium longum (strain DJO10A).